The chain runs to 168 residues: Ribosome maturation factor RimM (168 aa).

The PRC barrel domain occupies 96 to 168 (EGDYYWTDLI…IIVVEWDADF (73 aa)).

Belongs to the RimM family. As to quaternary structure, binds ribosomal protein uS19.

Its subcellular location is the cytoplasm. Its function is as follows. An accessory protein needed during the final step in the assembly of 30S ribosomal subunit, possibly for assembly of the head region. Essential for efficient processing of 16S rRNA. May be needed both before and after RbfA during the maturation of 16S rRNA. It has affinity for free ribosomal 30S subunits but not for 70S ribosomes. The polypeptide is Ribosome maturation factor RimM (Coxiella burnetii (strain RSA 331 / Henzerling II)).